The primary structure comprises 218 residues: Adenylate kinase (218 aa).

10–15 (GAGKGT) is an ATP binding site. Residues 30–59 (STGDMLRAAVKAGTPLGIEAKKVMDAGGLM) are NMP. Residues Thr-31, Arg-36, 57–59 (GLM), 85–88 (GYPR), and Gln-92 each bind AMP. Residues 122–159 (GRWVHLASGRSYNTQSNPPKVAGQDDITGEALIQRDDD) form an LID region. Residues Arg-123 and 132-133 (SY) each bind ATP. 2 residues coordinate AMP: Arg-156 and Arg-167. Position 203 (Gly-203) interacts with ATP.

Belongs to the adenylate kinase family. In terms of assembly, monomer.

It localises to the cytoplasm. It catalyses the reaction AMP + ATP = 2 ADP. It participates in purine metabolism; AMP biosynthesis via salvage pathway; AMP from ADP: step 1/1. Functionally, catalyzes the reversible transfer of the terminal phosphate group between ATP and AMP. Plays an important role in cellular energy homeostasis and in adenine nucleotide metabolism. The protein is Adenylate kinase of Bordetella avium (strain 197N).